The chain runs to 365 residues: Metallophosphoesterase 1 homolog (365 aa).

A helical transmembrane segment spans residues 10-30 (PILLAIILVVYNEYFIFFIAF). A divalent metal cation-binding residues include D54, D96, N132, H208, H262, and H264. Residues 319 to 339 (ILQIMVYIFGGIGIVILAFIL) traverse the membrane as a helical segment.

This sequence belongs to the metallophosphoesterase superfamily. MPPE1 family. Mn(2+) is required as a cofactor.

It localises to the endoplasmic reticulum-Golgi intermediate compartment membrane. It is found in the golgi apparatus. The protein localises to the cis-Golgi network membrane. In terms of biological role, metallophosphoesterase required for transport of GPI-anchor proteins from the endoplasmic reticulum to the Golgi. Acts in lipid remodeling steps of GPI-anchor maturation by mediating the removal of a side-chain ethanolamine-phosphate (EtNP) from the second Man (Man2) of the GPI intermediate, an essential step for efficient transport of GPI-anchor proteins. The chain is Metallophosphoesterase 1 homolog from Caenorhabditis elegans.